Reading from the N-terminus, the 339-residue chain is Holliday junction branch migration complex subunit RuvB (339 aa).

The interval 1–187 (MQGFEDENRI…FGVICKLDYY (187 aa)) is large ATPase domain (RuvB-L). Residues L26, R27, G68, K71, T72, T73, 134-136 (EDF), R177, Y187, and R224 each bind ATP. T72 contacts Mg(2+). The segment at 188–258 (TVDELSKIVL…VAKDALELLG (71 aa)) is small ATPAse domain (RuvB-S). Residues 261-339 (SLGLDFVDEK…HLKIPYPNEK (79 aa)) form a head domain (RuvB-H) region. 3 residues coordinate DNA: R297, R316, and R321.

This sequence belongs to the RuvB family. In terms of assembly, homohexamer. Forms an RuvA(8)-RuvB(12)-Holliday junction (HJ) complex. HJ DNA is sandwiched between 2 RuvA tetramers; dsDNA enters through RuvA and exits via RuvB. An RuvB hexamer assembles on each DNA strand where it exits the tetramer. Each RuvB hexamer is contacted by two RuvA subunits (via domain III) on 2 adjacent RuvB subunits; this complex drives branch migration. In the full resolvosome a probable DNA-RuvA(4)-RuvB(12)-RuvC(2) complex forms which resolves the HJ.

It is found in the cytoplasm. It carries out the reaction ATP + H2O = ADP + phosphate + H(+). Functionally, the RuvA-RuvB-RuvC complex processes Holliday junction (HJ) DNA during genetic recombination and DNA repair, while the RuvA-RuvB complex plays an important role in the rescue of blocked DNA replication forks via replication fork reversal (RFR). RuvA specifically binds to HJ cruciform DNA, conferring on it an open structure. The RuvB hexamer acts as an ATP-dependent pump, pulling dsDNA into and through the RuvAB complex. RuvB forms 2 homohexamers on either side of HJ DNA bound by 1 or 2 RuvA tetramers; 4 subunits per hexamer contact DNA at a time. Coordinated motions by a converter formed by DNA-disengaged RuvB subunits stimulates ATP hydrolysis and nucleotide exchange. Immobilization of the converter enables RuvB to convert the ATP-contained energy into a lever motion, pulling 2 nucleotides of DNA out of the RuvA tetramer per ATP hydrolyzed, thus driving DNA branch migration. The RuvB motors rotate together with the DNA substrate, which together with the progressing nucleotide cycle form the mechanistic basis for DNA recombination by continuous HJ branch migration. Branch migration allows RuvC to scan DNA until it finds its consensus sequence, where it cleaves and resolves cruciform DNA. The protein is Holliday junction branch migration complex subunit RuvB of Clostridioides difficile (strain 630) (Peptoclostridium difficile).